A 435-amino-acid polypeptide reads, in one-letter code: Hyaluronidase-1 (435 aa).

Residues 1 to 21 (MAAHLLPICTLFLNLLSVAQG) form the signal peptide. 2 disulfides stabilise this stretch: cysteine 43–cysteine 333 and cysteine 207–cysteine 221. Residues asparagine 70, asparagine 99, asparagine 107, and asparagine 121 are each glycosylated (N-linked (GlcNAc...) asparagine). Catalysis depends on glutamate 131, which acts as the Proton donor. 3 N-linked (GlcNAc...) asparagine glycosylation sites follow: asparagine 216, asparagine 256, and asparagine 350. 3 cysteine pairs are disulfide-bonded: cysteine 358–cysteine 369, cysteine 363–cysteine 418, and cysteine 420–cysteine 429. One can recognise an EGF-like domain in the interval 418–429 (CRCYPGWRGTWC).

The protein belongs to the glycosyl hydrolase 56 family. Highly expressed in spleen, kidney, and lung.

The protein localises to the secreted. It localises to the lysosome. The catalysed reaction is Random hydrolysis of (1-&gt;4)-linkages between N-acetyl-beta-D-glucosamine and D-glucuronate residues in hyaluronate.. Its function is as follows. May have a role in promoting tumor progression. May block the TGFB1-enhanced cell growth. In Sus scrofa (Pig), this protein is Hyaluronidase-1 (HYAL1).